Consider the following 403-residue polypeptide: SH3 and cysteine-rich domain-containing protein (403 aa).

The interval 1-51 is disordered; sequence MIPPSGAREDSGDGLTGEATGTEQPPSPASTSSLESKLQKLKRSLSFKTKS. The segment covering 19–36 has biased composition (polar residues); that stretch reads ATGTEQPPSPASTSSLES. Positions 39–51 are enriched in basic residues; that stretch reads QKLKRSLSFKTKS. Residues 108 to 160 form a Phorbol-ester/DAG-type zinc finger; that stretch reads LHAFQEHVFKKPTFCDVCNHMIVGTHAKHGLRCGACKMSIHHKCADGLAPQRC. The tract at residues 212-264 is disordered; sequence QRTKKGGSGSGSDSPPRTSTSELVDVPEEADGPGDGSDMRTRSNSVFTYPENG. Residues 222–232 show a composition bias toward low complexity; sequence GSDSPPRTSTS. 2 consecutive SH3 domains span residues 286–345 and 348–403; these read LQMN…RVEE and KIYR…LVDV.

As to quaternary structure, interacts (via SH3 domains) with CACNA1S. Interacts with CACNA1H. Interacts with CACNA1C. Expressed predominantly in brain Detected in brain neurons, more specifically in hippocampus, cerebellum and inferior olive. Highly expressed in urinary bladder, and detected at lower levels in adrenal gland. Detected at very low levels in heart, liver, lung and kidney.

It is found in the cytoplasm. Its subcellular location is the cytosol. It localises to the cell membrane. The protein localises to the sarcolemma. Functionally, promotes expression of the ion channel CACNA1H at the cell membrane, and thereby contributes to the regulation of channel activity. Plays a minor and redundant role in promoting the expression of calcium channel CACNA1S at the cell membrane, and thereby contributes to increased channel activity. Slows the rate of calcium-mediated inactivation of CACNA1C calcium channel activity. The polypeptide is SH3 and cysteine-rich domain-containing protein (Mus musculus (Mouse)).